The sequence spans 72 residues: uncharacterized protein (72 aa).

Positions 1 to 17 (MSLGLAIAVGIVLGVVA) are cleaved as a signal peptide.

This is an uncharacterized protein from Schizosaccharomyces pombe (strain 972 / ATCC 24843) (Fission yeast).